Here is a 337-residue protein sequence, read N- to C-terminus: Aspartate-semialdehyde dehydrogenase 2 (337 aa).

NADP(+) contacts are provided by residues 13-16 (TGAV) and 41-42 (RS). Residue Arg101 participates in phosphate binding. The active-site Acyl-thioester intermediate is the Cys132. Gln159 contributes to the substrate binding site. Residue 162–163 (SG) participates in NADP(+) binding. Lys216 serves as a coordination point for phosphate. Arg238 provides a ligand contact to substrate. His245 (proton acceptor) is an active-site residue. Asn316 serves as a coordination point for NADP(+).

This sequence belongs to the aspartate-semialdehyde dehydrogenase family. Homodimer.

It catalyses the reaction L-aspartate 4-semialdehyde + phosphate + NADP(+) = 4-phospho-L-aspartate + NADPH + H(+). It participates in amino-acid biosynthesis; L-lysine biosynthesis via DAP pathway; (S)-tetrahydrodipicolinate from L-aspartate: step 2/4. It functions in the pathway amino-acid biosynthesis; L-methionine biosynthesis via de novo pathway; L-homoserine from L-aspartate: step 2/3. The protein operates within amino-acid biosynthesis; L-threonine biosynthesis; L-threonine from L-aspartate: step 2/5. Catalyzes the NADPH-dependent formation of L-aspartate-semialdehyde (L-ASA) by the reductive dephosphorylation of L-aspartyl-4-phosphate. In Vibrio cholerae serotype O1 (strain ATCC 39315 / El Tor Inaba N16961), this protein is Aspartate-semialdehyde dehydrogenase 2 (asd2).